The following is a 102-amino-acid chain: Small ribosomal subunit protein uS10 (102 aa).

A disordered region spans residues 37–61; that stretch reads PIPLPTKSLKITTRKSTDGEGSSSF.

Belongs to the universal ribosomal protein uS10 family. As to quaternary structure, part of the 30S ribosomal subunit.

In terms of biological role, involved in the binding of tRNA to the ribosomes. The chain is Small ribosomal subunit protein uS10 from Methanococcus vannielii (strain ATCC 35089 / DSM 1224 / JCM 13029 / OCM 148 / SB).